The sequence spans 274 residues: Peroxiredoxin-4 (274 aa).

The N-terminal stretch at 1–40 (MEARSKLLDGTTASRRWTRKLVLLLPPLLLFLLRTESLQG) is a signal peptide. In terms of domain architecture, Thioredoxin spans 82 to 240 (AKISKPAPYW…TLRLVQAFQY (159 aa)). The Cysteine sulfenic acid (-SOH) intermediate role is filled by C127.

It belongs to the peroxiredoxin family. AhpC/Prx1 subfamily. As to quaternary structure, homodimer; disulfide-linked, upon oxidation. 5 homodimers assemble to form a ring-like decamer. Post-translationally, the enzyme can be inactivated by further oxidation of the cysteine sulfenic acid (C(P)-SOH) to sulphinic acid (C(P)-SO2H) and sulphonic acid (C(P)-SO3H) instead of its condensation to a disulfide bond.

It is found in the cytoplasm. Its subcellular location is the endoplasmic reticulum. It carries out the reaction a hydroperoxide + [thioredoxin]-dithiol = an alcohol + [thioredoxin]-disulfide + H2O. In terms of biological role, thiol-specific peroxidase that catalyzes the reduction of hydrogen peroxide and organic hydroperoxides to water and alcohols, respectively. Plays a role in cell protection against oxidative stress by detoxifying peroxides and as sensor of hydrogen peroxide-mediated signaling events. Regulates the activation of NF-kappa-B in the cytosol by a modulation of I-kappa-B-alpha phosphorylation. The polypeptide is Peroxiredoxin-4 (Prdx4) (Mus musculus (Mouse)).